The following is a 142-amino-acid chain: Hemoglobin subunit beta-2 (142 aa).

A Globin domain is found at 2 to 142 (SLTDEEKHLI…VTEALSCQYH (141 aa)). Heme b contacts are provided by His59 and His88.

This sequence belongs to the globin family. Heterotetramer of two alpha chains and two beta chains. In terms of tissue distribution, red blood cells.

Its function is as follows. Involved in oxygen transport from the lung to the various peripheral tissues. The chain is Hemoglobin subunit beta-2 (HBB2) from Torpedo marmorata (Marbled electric ray).